Here is a 607-residue protein sequence, read N- to C-terminus: UvrABC system protein C (607 aa).

Residues 19 to 97 (TLSGVYQMRD…IKQYQPKFNI (79 aa)) form the GIY-YIG domain. A UVR domain is found at 205–240 (EHLLQTLTEHMLQASAAQQYERAAIVRDQISELRTI).

The protein belongs to the UvrC family. Interacts with UvrB in an incision complex.

It localises to the cytoplasm. The UvrABC repair system catalyzes the recognition and processing of DNA lesions. UvrC both incises the 5' and 3' sides of the lesion. The N-terminal half is responsible for the 3' incision and the C-terminal half is responsible for the 5' incision. The protein is UvrABC system protein C of Dichelobacter nodosus (strain VCS1703A).